A 439-amino-acid chain; its full sequence is Lipase 1 (439 aa).

An N-terminal signal peptide occupies residues Met1–Gly24. Positions Gly28 to Ile60 are disordered. The span at Gly29–Pro51 shows a compositional bias: acidic residues. N-linked (GlcNAc...) asparagine glycans are attached at residues Asn124 and Asn151. Residue Ser197 is the Charge relay system of the active site. N-linked (GlcNAc...) asparagine glycosylation is found at Asn346 and Asn379. His393 acts as the Charge relay system in catalysis. N-linked (GlcNAc...) asparagine glycosylation is present at Asn426.

It belongs to the AB hydrolase superfamily. Lipase family. In 14 hours embryos expression is seen in the foregut/midgut boundary.

Its subcellular location is the secreted. Could be a digestive enzyme. The chain is Lipase 1 (Lip1) from Drosophila melanogaster (Fruit fly).